The following is a 277-amino-acid chain: Shikimate dehydrogenase (NADP(+)) (277 aa).

Shikimate contacts are provided by residues 17–19 (SRS) and threonine 64. Lysine 68 (proton acceptor) is an active-site residue. Residues asparagine 88 and aspartate 103 each coordinate shikimate. NADP(+) is bound by residues 128–132 (GAGGS), 152–157 (NRTLDR), and leucine 217. Tyrosine 219 contacts shikimate. Residue glycine 240 participates in NADP(+) binding.

It belongs to the shikimate dehydrogenase family. In terms of assembly, homodimer.

The enzyme catalyses shikimate + NADP(+) = 3-dehydroshikimate + NADPH + H(+). Its pathway is metabolic intermediate biosynthesis; chorismate biosynthesis; chorismate from D-erythrose 4-phosphate and phosphoenolpyruvate: step 4/7. In terms of biological role, involved in the biosynthesis of the chorismate, which leads to the biosynthesis of aromatic amino acids. Catalyzes the reversible NADPH linked reduction of 3-dehydroshikimate (DHSA) to yield shikimate (SA). This is Shikimate dehydrogenase (NADP(+)) from Rhodopseudomonas palustris (strain BisB18).